The sequence spans 142 residues: NTF2-related export protein 2 (142 aa).

An NTF2 domain is found at 17–136 (AAEEFVNIYY…WKIASDCFRF (120 aa)).

In terms of assembly, associates with NXF1, NXF2, NXF3 and NXF5.

Its subcellular location is the nucleus. The protein localises to the cytoplasm. Its function is as follows. Regulator of protein export for NES-containing proteins. Also plays a role in mRNA nuclear export. This chain is NTF2-related export protein 2 (NXT2), found in Bos taurus (Bovine).